The sequence spans 243 residues: Complement C1q tumor necrosis factor-related protein 5 (243 aa).

Residues Met1–Gly15 form the signal peptide. The disordered stretch occupies residues Gly15–Pro124. The Collagen-like domain maps to Gly30–Ala95. Residues Ser99–Ser238 form the C1q domain.

Homotrimer (via collagen-like domain). May form higher order oligomers by supercoiling of the trimers. May interact with ERFE.

Its subcellular location is the secreted. This chain is Complement C1q tumor necrosis factor-related protein 5 (C1qtnf5), found in Rattus norvegicus (Rat).